We begin with the raw amino-acid sequence, 448 residues long: Tapasin (448 aa).

The first 20 residues, M1–A20, serve as a signal peptide directing secretion. At G21–V414 the chain is on the lumenal side. C27 and C91 form a disulfide bridge. N-linked (GlcNAc...) asparagine glycosylation is present at N253. The Ig-like C1-type domain maps to P292–T399. The cysteines at positions 315 and 382 are disulfide-linked. Residues G415–V435 traverse the membrane as a helical segment. Topologically, residues Y436–E448 are cytoplasmic.

In terms of assembly, heterodimer with PDIA3; disulfide-linked. Obligatory mediator for the interaction between newly assembled MHC class I molecules, calreticulin, PDIA3 and TAP. Up to 4 MHC class I/tapasin complexes bind to 1 TAP. Interacts with HLA-G-B2M complex; this interaction is required for loading of high affinity peptides. On its own or as part of MHC class I peptide loading complex, interacts with ligand-free MR1 or MR1-B2M complex, providing for stable MR1 pools ready for metabolite antigen processing. As to expression, neutrophils, mostly in fully differentiated cells.

The protein resides in the endoplasmic reticulum membrane. Its function is as follows. Involved in the association of MHC class I with transporter associated with antigen processing (TAP) and in the assembly of MHC class I with peptide (peptide loading). In Homo sapiens (Human), this protein is Tapasin.